The chain runs to 545 residues: Toxin BC_0920 (545 aa).

The LXG domain maps to 1 to 217 (MSLNMYLGEV…ARQAANSIEE (217 aa)).

The protein in the N-terminal section; belongs to the LXG family. In the C-terminal section; belongs to the bacterial EndoU family. In terms of assembly, probably interacts with cognate immunity protein BC_0921. The interaction inhibits the toxic activity of BC_0921.

It localises to the secreted. In terms of biological role, toxic component of an LXG toxin-immunity module. The C-terminus (residues 322-545) has RNase activity in E.coli which is neutralized by cognate immunity protein BC_0921, but not by immunity proteins specific to other toxins with the LXG domain. Degrades 5S rRNA and several tRNAs in vitro; cleavage is endonucleolytic within the anticodon loop for tRNA(GAU-Ile) and tRNA(UUC-Glu) but total for 5S rRNA and at least one other tRNA. RNase activity is suppressed by cognate immunity protein BC_0921. The chain is Toxin BC_0920 from Bacillus cereus (strain ATCC 14579 / DSM 31 / CCUG 7414 / JCM 2152 / NBRC 15305 / NCIMB 9373 / NCTC 2599 / NRRL B-3711).